The chain runs to 193 residues: Dual-action ribosomal maturation protein DarP (193 aa).

It belongs to the DarP family.

The protein resides in the cytoplasm. In terms of biological role, member of a network of 50S ribosomal subunit biogenesis factors which assembles along the 30S-50S interface, preventing incorrect 23S rRNA structures from forming. Promotes peptidyl transferase center (PTC) maturation. This is Dual-action ribosomal maturation protein DarP from Vibrio cholerae serotype O1 (strain ATCC 39315 / El Tor Inaba N16961).